The following is a 468-amino-acid chain: 6-phosphogluconate dehydrogenase, decarboxylating (468 aa).

Residues 9–14, 32–34, 73–75, and Asn-101 each bind NADP(+); these read GLAVMG, NRS, and VQA. Substrate-binding positions include Asn-101 and 127 to 129; that span reads SGG. Lys-182 (proton acceptor) is an active-site residue. 185-186 serves as a coordination point for substrate; that stretch reads HN. Catalysis depends on Glu-189, which acts as the Proton donor. Positions 190, 259, 286, 444, and 450 each coordinate substrate.

This sequence belongs to the 6-phosphogluconate dehydrogenase family. In terms of assembly, homodimer.

It catalyses the reaction 6-phospho-D-gluconate + NADP(+) = D-ribulose 5-phosphate + CO2 + NADPH. Its pathway is carbohydrate degradation; pentose phosphate pathway; D-ribulose 5-phosphate from D-glucose 6-phosphate (oxidative stage): step 3/3. In terms of biological role, catalyzes the oxidative decarboxylation of 6-phosphogluconate to ribulose 5-phosphate and CO(2), with concomitant reduction of NADP to NADPH. The polypeptide is 6-phosphogluconate dehydrogenase, decarboxylating (gnd) (Staphylococcus aureus (strain Mu50 / ATCC 700699)).